We begin with the raw amino-acid sequence, 610 residues long: MPFDLLAERKRWNAGYESIDTSSQKLTEVVTPITVTWENIEVKTRKKLFSKKQKQLLNRVSGIAKPGEMVALMGASGAGKTTLMNVLMCRNMKGLEKNGTVKVNGTKIGKEISLISGFAQQQEIFIPTLTVDEYLMIQARLRMKANKHTRRERVDEIIEMLRLQNCRDLKIGTPGLVKGISGGEARRLTFACELLSNPSLLFADEPTSGLDSFMAASVVQILKNLANSGRTLIHQPTAELFFQFDKIIFLSMGKTAFMGTPHESVKFFADCGHPIPKLFNPPEWIQSKLSVIPNNETKSRETIGKIIEFYEKSIIHQKSIVEIRVIATTELPPYIENPGFFAETGALLKRACLDVIRSPAQMRMKLIQKVVMGLFIGSLYWQQPLDPRGVRNTNSALYFLIAELTFSTMFGIMTFMEHELPLIAREYHDGLFYVISYYISRFLSYLPLFTIDGALMIVISYWMIGLNSTWQQVAKSILISVLVEQSATSCGLFLACLFETTSLAIAFAVPASGLFALLSGLYGNTNNFPVYIRWMQWTSWCRYGFEGLVVNQWSQVDNPKWDPFYRELILKQFSFNKDNYQLDVIGLCSIVIFFYLAGYIALFIRIRLSR.

In terms of domain architecture, ABC transporter spans 42–277 (VKTRKKLFSK…FADCGHPIPK (236 aa)). 74 to 81 (GASGAGKT) provides a ligand contact to ATP. Transmembrane regions (helical) follow at residues 396–416 (ALYFLIAELTFSTMFGIMTFM), 446–466 (LPLFTIDGALMIVISYWMIGL), 477–497 (ILISVLVEQSATSCGLFLACL), 503–523 (LAIAFAVPASGLFALLSGLYG), and 584–604 (VIGLCSIVIFFYLAGYIALFI).

Belongs to the ABC transporter superfamily. ABCG family. Eye pigment precursor importer (TC 3.A.1.204) subfamily.

The protein resides in the membrane. Its function is as follows. Required for efficient RNA interference (RNAi) of pop-1 indicating a role in the germline development. In Caenorhabditis elegans, this protein is ABC transporter ATP-binding protein/permease wht-3 (wht-3).